A 161-amino-acid chain; its full sequence is Peptidyl-prolyl cis-trans isomerase-like 3 (161 aa).

N-acetylserine is present on Ser2. One can recognise a PPIase cyclophilin-type domain in the interval 2–154; sequence SVTLHTDVGD…NDVHIKDITI (153 aa). Arg61 carries the post-translational modification Omega-N-methylarginine.

It belongs to the cyclophilin-type PPIase family. PPIL3 subfamily. Identified in the spliceosome C complex. Ubiquitous. Detected at low levels.

The catalysed reaction is [protein]-peptidylproline (omega=180) = [protein]-peptidylproline (omega=0). PPIases accelerate the folding of proteins. It catalyzes the cis-trans isomerization of proline imidic peptide bonds in oligopeptides. May be involved in pre-mRNA splicing. The chain is Peptidyl-prolyl cis-trans isomerase-like 3 (PPIL3) from Homo sapiens (Human).